The following is a 470-amino-acid chain: Cysteine--tRNA ligase (470 aa).

Cysteine 28 contacts Zn(2+). The 'HIGH' region motif lies at 30 to 40 (PTVYNYIHIGN). Zn(2+) is bound by residues cysteine 212, histidine 237, and glutamate 241. Positions 271 to 275 (KMSKS) match the 'KMSKS' region motif. Lysine 274 is a binding site for ATP.

The protein belongs to the class-I aminoacyl-tRNA synthetase family. In terms of assembly, monomer. It depends on Zn(2+) as a cofactor.

Its subcellular location is the cytoplasm. The catalysed reaction is tRNA(Cys) + L-cysteine + ATP = L-cysteinyl-tRNA(Cys) + AMP + diphosphate. The protein is Cysteine--tRNA ligase of Pediococcus pentosaceus (strain ATCC 25745 / CCUG 21536 / LMG 10740 / 183-1w).